Here is a 274-residue protein sequence, read N- to C-terminus: 2,3,4,5-tetrahydropyridine-2,6-dicarboxylate N-succinyltransferase (274 aa).

It belongs to the transferase hexapeptide repeat family.

Its subcellular location is the cytoplasm. It carries out the reaction (S)-2,3,4,5-tetrahydrodipicolinate + succinyl-CoA + H2O = (S)-2-succinylamino-6-oxoheptanedioate + CoA. The protein operates within amino-acid biosynthesis; L-lysine biosynthesis via DAP pathway; LL-2,6-diaminopimelate from (S)-tetrahydrodipicolinate (succinylase route): step 1/3. The sequence is that of 2,3,4,5-tetrahydropyridine-2,6-dicarboxylate N-succinyltransferase from Proteus mirabilis (strain HI4320).